The chain runs to 230 residues: uncharacterized protein (230 aa).

Disordered regions lie at residues 63 to 90 (TDCQ…KKTI) and 194 to 230 (KKLE…YKEH). A compositionally biased stretch (basic and acidic residues) spans 194-217 (KKLEEREQMDKHPQDRDNKDKEVN).

This is an uncharacterized protein from Caenorhabditis elegans.